The following is a 130-amino-acid chain: Large ribosomal subunit protein bL12 (130 aa).

It belongs to the bacterial ribosomal protein bL12 family. As to quaternary structure, homodimer. Part of the ribosomal stalk of the 50S ribosomal subunit. Forms a multimeric L10(L12)X complex, where L10 forms an elongated spine to which 2 to 4 L12 dimers bind in a sequential fashion. Binds GTP-bound translation factors.

Functionally, forms part of the ribosomal stalk which helps the ribosome interact with GTP-bound translation factors. Is thus essential for accurate translation. The polypeptide is Large ribosomal subunit protein bL12 (Mycolicibacterium vanbaalenii (strain DSM 7251 / JCM 13017 / BCRC 16820 / KCTC 9966 / NRRL B-24157 / PYR-1) (Mycobacterium vanbaalenii)).